Reading from the N-terminus, the 508-residue chain is Protein NODULATION SIGNALING PATHWAY 2 (508 aa).

A disordered region spans residues 75–98 (ITTTTTTTTTTDEEEEEMETTTTT). Residues 108–500 (VGDDSKGLKL…RRLLSASLWT (393 aa)) form the GRAS domain. Residues 115 to 190 (LKLVHLLMAG…NNHHHHNNNK (76 aa)) form a leucine repeat I (LRI) region. The tract at residues 209–273 (FQLLQDMSPY…NNGPHLRITA (65 aa)) is VHIID. A VHIID motif is present at residues 240-244 (VHVID). The tract at residues 289–321 (ETGRRLTSFAASLGQPFSFHHCRLDSDETFRPS) is leucine repeat II (LRII). Residues 331 to 422 (LVFNCMLNLP…RVFFGPRIAG (92 aa)) are PFYRE. The SAW stretch occupies residues 425–500 (GRIYRTGGEE…RRLLSASLWT (76 aa)).

Belongs to the GRAS family. As to quaternary structure, interacts with RAM1. Interacts with IPN2 and RAD1. As to expression, expressed in roots, shoots and leaves.

The protein localises to the nucleus membrane. The protein resides in the endoplasmic reticulum. Functionally, transcriptional regulator essential for Nod-factor-induced gene expression. Acts downstream of calcium spiking and DMI3, a calcium/calmodulin-dependent protein kinase (CCaMK). Transcription factor involved in the control of strigolactone biosynthesis in roots through the activation of the beta-carotene isomerase D27, which participates in a pathway leading to biosynthesis of strigolactones. This chain is Protein NODULATION SIGNALING PATHWAY 2, found in Medicago truncatula (Barrel medic).